Reading from the N-terminus, the 284-residue chain is N-acylphosphatidylethanolamine synthase (284 aa).

Residues 21–37 traverse the membrane as a helical segment; that stretch reads TVIMAVSAFAKAVANLC. Positions 67–72 match the HXXXXD motif motif; it reads HMSTLD. A hydrophilic region spans residues 122–163; the sequence is GGGIYQENMNEALQRLKDGSWLHTFPEGKVFQDDVPIRRLKW.

This sequence belongs to the taffazin family. In terms of tissue distribution, essentially present in young tissues. Expressed in roots, cotyledons, leaves, and shoot and root apical meristems.

The protein resides in the cell membrane. Its function is as follows. Acyltransferase that catalyzes the N-acylation of phosphatidylethanolamine to form N-acylphosphatidylethanolamine (N-acyl-PE) (e.g. NAPEs containing C16:0, C16:1, C18:0, and C18:1). Also mediates the formation of acylphosphatidylglycerol (acyl-PG) from lysoglycerophospholipid by O-acylation. Uses acyl-CoA as acyl donors. Acylates 1-acyllysophosphatidylethanolamine (1-acyllyso-PE) and 1-acyllysophosphatidylglycerol (1-acyllyso-PG) at the sn-2-position. This Arabidopsis thaliana (Mouse-ear cress) protein is N-acylphosphatidylethanolamine synthase.